Reading from the N-terminus, the 498-residue chain is Glycerol kinase (498 aa).

Position 12 (Thr12) interacts with ADP. Residues Thr12, Thr13, and Ser14 each contribute to the ATP site. Residue Thr12 participates in sn-glycerol 3-phosphate binding. Arg16 contributes to the ADP binding site. Residues Arg82, Glu83, Tyr134, and Asp244 each coordinate sn-glycerol 3-phosphate. 5 residues coordinate glycerol: Arg82, Glu83, Tyr134, Asp244, and Gln245. Residues Thr266 and Gly310 each contribute to the ADP site. ATP contacts are provided by Thr266, Gly310, Gln314, and Gly411. 2 residues coordinate ADP: Gly411 and Asn415.

The protein belongs to the FGGY kinase family.

The enzyme catalyses glycerol + ATP = sn-glycerol 3-phosphate + ADP + H(+). It participates in polyol metabolism; glycerol degradation via glycerol kinase pathway; sn-glycerol 3-phosphate from glycerol: step 1/1. Inhibited by fructose 1,6-bisphosphate (FBP). Key enzyme in the regulation of glycerol uptake and metabolism. Catalyzes the phosphorylation of glycerol to yield sn-glycerol 3-phosphate. This Chloroflexus aurantiacus (strain ATCC 29366 / DSM 635 / J-10-fl) protein is Glycerol kinase.